The chain runs to 467 residues: Siroheme synthase (467 aa).

Residues 1-203 form a precorrin-2 dehydrogenase /sirohydrochlorin ferrochelatase region; it reads METLPIFMKL…GQEEAARHAM (203 aa). Residues 22-23 and 43-44 each bind NAD(+); these read EI and PE. Position 128 is a phosphoserine (Ser-128). The segment at 216–467 is uroporphyrinogen-III C-methyltransferase; it reads GEVYLVGGGP…APSPEVVSAG (252 aa). Residue Pro-225 participates in S-adenosyl-L-methionine binding. Catalysis depends on Asp-248, which acts as the Proton acceptor. Lys-270 serves as the catalytic Proton donor. Residues 301-303, Ile-306, 331-332, Met-383, and Gly-412 contribute to the S-adenosyl-L-methionine site; these read GGD and TA.

In the N-terminal section; belongs to the precorrin-2 dehydrogenase / sirohydrochlorin ferrochelatase family. This sequence in the C-terminal section; belongs to the precorrin methyltransferase family.

It catalyses the reaction uroporphyrinogen III + 2 S-adenosyl-L-methionine = precorrin-2 + 2 S-adenosyl-L-homocysteine + H(+). The catalysed reaction is precorrin-2 + NAD(+) = sirohydrochlorin + NADH + 2 H(+). The enzyme catalyses siroheme + 2 H(+) = sirohydrochlorin + Fe(2+). It functions in the pathway cofactor biosynthesis; adenosylcobalamin biosynthesis; precorrin-2 from uroporphyrinogen III: step 1/1. Its pathway is cofactor biosynthesis; adenosylcobalamin biosynthesis; sirohydrochlorin from precorrin-2: step 1/1. It participates in porphyrin-containing compound metabolism; siroheme biosynthesis; precorrin-2 from uroporphyrinogen III: step 1/1. The protein operates within porphyrin-containing compound metabolism; siroheme biosynthesis; siroheme from sirohydrochlorin: step 1/1. It functions in the pathway porphyrin-containing compound metabolism; siroheme biosynthesis; sirohydrochlorin from precorrin-2: step 1/1. Multifunctional enzyme that catalyzes the SAM-dependent methylations of uroporphyrinogen III at position C-2 and C-7 to form precorrin-2 via precorrin-1. Then it catalyzes the NAD-dependent ring dehydrogenation of precorrin-2 to yield sirohydrochlorin. Finally, it catalyzes the ferrochelation of sirohydrochlorin to yield siroheme. The sequence is that of Siroheme synthase from Methylobacillus flagellatus (strain ATCC 51484 / DSM 6875 / VKM B-1610 / KT).